Consider the following 209-residue polypeptide: Large ribosomal subunit protein uL3 (209 aa).

The tract at residues 141–164 (RAVGSMGGSSDPSRTFKSKKMPGH) is disordered.

Belongs to the universal ribosomal protein uL3 family. Part of the 50S ribosomal subunit. Forms a cluster with proteins L14 and L19.

In terms of biological role, one of the primary rRNA binding proteins, it binds directly near the 3'-end of the 23S rRNA, where it nucleates assembly of the 50S subunit. The sequence is that of Large ribosomal subunit protein uL3 from Clostridium acetobutylicum (strain ATCC 824 / DSM 792 / JCM 1419 / IAM 19013 / LMG 5710 / NBRC 13948 / NRRL B-527 / VKM B-1787 / 2291 / W).